A 521-amino-acid chain; its full sequence is Bifunctional purine biosynthesis protein PurH (521 aa).

An MGS-like domain is found at 1–150; sequence MSEDRKAIKR…KNHPSVAVVT (150 aa).

It belongs to the PurH family.

The enzyme catalyses (6R)-10-formyltetrahydrofolate + 5-amino-1-(5-phospho-beta-D-ribosyl)imidazole-4-carboxamide = 5-formamido-1-(5-phospho-D-ribosyl)imidazole-4-carboxamide + (6S)-5,6,7,8-tetrahydrofolate. The catalysed reaction is IMP + H2O = 5-formamido-1-(5-phospho-D-ribosyl)imidazole-4-carboxamide. It participates in purine metabolism; IMP biosynthesis via de novo pathway; 5-formamido-1-(5-phospho-D-ribosyl)imidazole-4-carboxamide from 5-amino-1-(5-phospho-D-ribosyl)imidazole-4-carboxamide (10-formyl THF route): step 1/1. It functions in the pathway purine metabolism; IMP biosynthesis via de novo pathway; IMP from 5-formamido-1-(5-phospho-D-ribosyl)imidazole-4-carboxamide: step 1/1. The polypeptide is Bifunctional purine biosynthesis protein PurH (Corynebacterium efficiens (strain DSM 44549 / YS-314 / AJ 12310 / JCM 11189 / NBRC 100395)).